We begin with the raw amino-acid sequence, 133 residues long: MVMLDTLANALATIQNAEMRAKSEALIWPASKLIINVLRVMQREGYIGEFEYIDDGRWGKIKVQLLGRINKTGVIKPRFPVKLRDLERMPHWLRKYLPAYNIGILILSTPHGVLSHKEAIAKKTGGVLLAYVY.

Belongs to the universal ribosomal protein uS8 family. As to quaternary structure, part of the 30S ribosomal subunit.

Functionally, one of the primary rRNA binding proteins, it binds directly to 16S rRNA central domain where it helps coordinate assembly of the platform of the 30S subunit. The polypeptide is Small ribosomal subunit protein uS8 (Staphylothermus marinus (strain ATCC 43588 / DSM 3639 / JCM 9404 / F1)).